The following is a 438-amino-acid chain: MSIEVDWAAATSGPDGEALAERIRSFVHDKFQEITLPRFIRSVQVHSFDFGTIAPDLEVKDICEPFADFYEEEADDADTSVASEELGHELHESPYEDDMTYNPTAHNLHSFSHHPYPGEGFQPSALRSPLGDHLNPHFMPRASTPGIPGGTSTLGYHMRSLGGLSGTQTPLAAVAGGTSFASGWSDSGMGVGPRSQAARPAGPHHLAEPDLDTTNSTSRPSTANTLPSHPSLGHSGSSGSNPHTSDPTDAPQPSIETSDDPAAEGHSLPIPPRMRERRPEDFQVLCHAKYAGDVRMSLTAEILLDYPMPSFVGLPLKLNVTGITFDGVAVVAYIRKRVHFCFLSAEDADALLGSEQSQGSQNPSDDGRPRSGGDQKDKELKRQGGLLQEIRVDSEIGRKEDGKQVLKNVGKVERFVLAQVRRIFEEELVYPSFWTFLV.

In terms of domain architecture, SMP-LTD spans 1-438 (MSIEVDWAAA…VYPSFWTFLV (438 aa)). Disordered regions lie at residues 110 to 154 (SFSH…TSTL), 185 to 277 (SDSG…MRER), and 353 to 379 (GSEQSQGSQNPSDDGRPRSGGDQKDKE). Positions 212–226 (DTTNSTSRPSTANTL) are enriched in polar residues. Residues 227–245 (PSHPSLGHSGSSGSNPHTS) show a composition bias toward low complexity. A compositionally biased stretch (polar residues) spans 354 to 364 (SEQSQGSQNPS). Basic and acidic residues predominate over residues 365–379 (DDGRPRSGGDQKDKE).

The protein belongs to the MDM12 family. As to quaternary structure, component of the ER-mitochondria encounter structure (ERMES) or MDM complex, composed of mmm1, mdm10, mdm12 and mdm34. A mmm1 homodimer associates with one molecule of mdm12 on each side in a pairwise head-to-tail manner, and the SMP-LTD domains of mmm1 and mdm12 generate a continuous hydrophobic tunnel for phospholipid trafficking.

The protein localises to the mitochondrion outer membrane. It localises to the endoplasmic reticulum membrane. Its function is as follows. Component of the ERMES/MDM complex, which serves as a molecular tether to connect the endoplasmic reticulum (ER) and mitochondria. Components of this complex are involved in the control of mitochondrial shape and protein biogenesis, and function in nonvesicular lipid trafficking between the ER and mitochondria. Mdm12 is required for the interaction of the ER-resident membrane protein mmm1 and the outer mitochondrial membrane-resident beta-barrel protein mdm10. The mdm12-mmm1 subcomplex functions in the major beta-barrel assembly pathway that is responsible for biogenesis of all mitochondrial outer membrane beta-barrel proteins, and acts in a late step after the SAM complex. The mdm10-mdm12-mmm1 subcomplex further acts in the TOM40-specific pathway after the action of the mdm12-mmm1 complex. Essential for establishing and maintaining the structure of mitochondria and maintenance of mtDNA nucleoids. This Penicillium rubens (strain ATCC 28089 / DSM 1075 / NRRL 1951 / Wisconsin 54-1255) (Penicillium chrysogenum) protein is Mitochondrial distribution and morphology protein 12.